A 468-amino-acid polypeptide reads, in one-letter code: Transmembrane protein 151A (468 aa).

The segment at 1–20 (MPEGEGGDCGEVPALVPDGE) is disordered. 2 helical membrane passes run 45 to 65 (CLLLTLLIHACGAVVAWCRLA) and 98 to 118 (YLYIPLAFVSLLYLLYLAECW). The interval 384–438 (VSSNSLPPARPSGPRLPFSRSRLSLGAGGRTTPGVFRSLSGGPLGRRGEDTEPLE) is disordered.

The protein belongs to the TMEM151 family. Highly expressed in the central nervous system (CNS) including the cerebral cortex, hippocampus, spinal cord, brainstem, and thalamus. Expression is relatively low during postnatal stages but highly expressed at postnatal day 14 (P14), and declined in adulthood. Also expressed in the stomach, heart, liver, spleen, lung, kidney, and muscle.

The protein localises to the endoplasmic reticulum membrane. It is found in the cell projection. Its subcellular location is the axon. The protein resides in the dendrite. This chain is Transmembrane protein 151A (Tmem151a), found in Mus musculus (Mouse).